Here is a 342-residue protein sequence, read N- to C-terminus: Dihydroorotase (342 aa).

2 residues coordinate Zn(2+): His13 and His15. Residues 15 to 17 (HLR) and Asn41 each bind substrate. Positions 98, 135, and 173 each coordinate Zn(2+). Lys98 is subject to N6-carboxylysine. His135 lines the substrate pocket. Substrate is bound at residue Leu218. A Zn(2+)-binding site is contributed by Asp246. Residue Asp246 is part of the active site. Positions 250 and 262 each coordinate substrate.

It belongs to the metallo-dependent hydrolases superfamily. DHOase family. Class II DHOase subfamily. As to quaternary structure, homodimer. Requires Zn(2+) as cofactor.

The catalysed reaction is (S)-dihydroorotate + H2O = N-carbamoyl-L-aspartate + H(+). Its pathway is pyrimidine metabolism; UMP biosynthesis via de novo pathway; (S)-dihydroorotate from bicarbonate: step 3/3. In terms of biological role, catalyzes the reversible cyclization of carbamoyl aspartate to dihydroorotate. This chain is Dihydroorotase, found in Vibrio vulnificus (strain CMCP6).